The primary structure comprises 476 residues: Ribosomal RNA small subunit methyltransferase F (476 aa).

S-adenosyl-L-methionine contacts are provided by residues Ala-124–Lys-130, Glu-148, Asp-175, and Asp-193. Cys-246 functions as the Nucleophile in the catalytic mechanism.

It belongs to the class I-like SAM-binding methyltransferase superfamily. RsmB/NOP family.

It localises to the cytoplasm. The catalysed reaction is cytidine(1407) in 16S rRNA + S-adenosyl-L-methionine = 5-methylcytidine(1407) in 16S rRNA + S-adenosyl-L-homocysteine + H(+). Specifically methylates the cytosine at position 1407 (m5C1407) of 16S rRNA. This chain is Ribosomal RNA small subunit methyltransferase F, found in Photobacterium profundum (strain SS9).